The following is a 250-amino-acid chain: Deoxynucleoside-5'-monophosphate kinase (250 aa).

The ATP site is built by Gly-14, Asp-16, and Thr-17. Positions 44, 65, 130, 137, 138, 150, 170, 172, 176, and 210 each coordinate dGMP.

Belongs to the dNMP kinase family. In terms of assembly, monomer.

The enzyme catalyses a 2'-deoxyribonucleoside 5'-phosphate + ATP = a 2'-deoxyribonucleoside 5'-diphosphate + ADP. Functionally, allows the synthesis of deoxyribonucleoside triphosphates necessary for the rapid viral DNA replication. Phosphorylates all four dNMPs. The enzyme had the highest activity with dAMP and had about 30% less activity with dTMP and dGMP, respectively. The lowest activity was observed with dCMP as the substrate (about 35% of that with dAMP). The protein is Deoxynucleoside-5'-monophosphate kinase of Escherichia coli (Enterobacteria phage T5).